The primary structure comprises 192 residues: MLVNFEGVDGVGKSTQISLLKEFRNDAVITKEPGGTEFGLMVRDYLLKNASKISNKTEIFLFLADRAEHYEKVLKPNYANLVLNDRSFVSGMAYAMANDSSLDIGLLLDLNKFALNSDLGDKFVFLKADEILLRNRLFSRGTSDEIEMRGIEYLMRVQGFMSIILSDLKFDVLEIDASLEVLEIQEKIRKFI.

7-14 (GVDGVGKS) provides a ligand contact to ATP.

The protein belongs to the thymidylate kinase family.

The catalysed reaction is dTMP + ATP = dTDP + ADP. Functionally, phosphorylation of dTMP to form dTDP in both de novo and salvage pathways of dTTP synthesis. The sequence is that of Thymidylate kinase from Campylobacter fetus subsp. fetus (strain 82-40).